Reading from the N-terminus, the 880-residue chain is Alanine--tRNA ligase (880 aa).

Residues histidine 568, histidine 572, cysteine 670, and histidine 674 each contribute to the Zn(2+) site.

This sequence belongs to the class-II aminoacyl-tRNA synthetase family. Zn(2+) serves as cofactor.

The protein resides in the cytoplasm. It catalyses the reaction tRNA(Ala) + L-alanine + ATP = L-alanyl-tRNA(Ala) + AMP + diphosphate. Its function is as follows. Catalyzes the attachment of alanine to tRNA(Ala) in a two-step reaction: alanine is first activated by ATP to form Ala-AMP and then transferred to the acceptor end of tRNA(Ala). Also edits incorrectly charged Ser-tRNA(Ala) and Gly-tRNA(Ala) via its editing domain. The polypeptide is Alanine--tRNA ligase (Ligilactobacillus salivarius (strain UCC118) (Lactobacillus salivarius)).